A 268-amino-acid polypeptide reads, in one-letter code: Phosphatidylglycerol--prolipoprotein diacylglyceryl transferase (268 aa).

The next 7 helical transmembrane spans lie at V10–I30, L56–Y76, W92–F112, F120–I140, P174–F194, M202–V222, and W236–W256. R139 provides a ligand contact to a 1,2-diacyl-sn-glycero-3-phospho-(1'-sn-glycerol).

This sequence belongs to the Lgt family.

Its subcellular location is the cell inner membrane. The enzyme catalyses L-cysteinyl-[prolipoprotein] + a 1,2-diacyl-sn-glycero-3-phospho-(1'-sn-glycerol) = an S-1,2-diacyl-sn-glyceryl-L-cysteinyl-[prolipoprotein] + sn-glycerol 1-phosphate + H(+). Its pathway is protein modification; lipoprotein biosynthesis (diacylglyceryl transfer). In terms of biological role, catalyzes the transfer of the diacylglyceryl group from phosphatidylglycerol to the sulfhydryl group of the N-terminal cysteine of a prolipoprotein, the first step in the formation of mature lipoproteins. The polypeptide is Phosphatidylglycerol--prolipoprotein diacylglyceryl transferase (Pseudomonas putida (strain ATCC 700007 / DSM 6899 / JCM 31910 / BCRC 17059 / LMG 24140 / F1)).